We begin with the raw amino-acid sequence, 812 residues long: Leucine-rich repeat-containing protein 41 (812 aa).

The interval 45–54 (ALFELCGRAV) is interaction with Elongin BC complex. Phosphoserine is present on residues serine 155, serine 276, and serine 326. Residues 267–408 (GEASRGRAPS…GARTRQGPGA (142 aa)) are disordered. At threonine 327 the chain carries Phosphothreonine. Residues 354–381 (TKRSPSAPAATSSASSSTSSYKRAPASS) are compositionally biased toward low complexity. Phosphoserine is present on residues serine 357 and serine 373. Positions 387-401 (PLKRFKRAAGKKGAR) are enriched in basic residues. LRR repeat units follow at residues 487–507 (WVSL…IFRL), 518–530 (AGCR…LSDL), 531–555 (FSPL…VLSI), 613–635 (SGSL…FGLV), 636–659 (LQTL…LADC), 701–728 (NSTL…VFSE), and 731–752 (SSSL…LLEF).

As to quaternary structure, part of an E3 ubiquitin-protein ligase complex with Elongin BC (ELOB and ELOC), RBX1 and CUL5. Component of a probable ECS(LRRC41) complex which contains CUL5, RNF7/RBX2, Elongin BC and LRRC41. Interacts with CUL5, RNF7, ELOB and ELOC.

The protein operates within protein modification; protein ubiquitination. In terms of biological role, probable substrate recognition component of an ECS (Elongin BC-CUL2/5-SOCS-box protein) E3 ubiquitin ligase complex which mediates the ubiquitination and subsequent proteasomal degradation of target proteins. This is Leucine-rich repeat-containing protein 41 (LRRC41) from Homo sapiens (Human).